Reading from the N-terminus, the 192-residue chain is Xanthine phosphoribosyltransferase (192 aa).

Xanthine contacts are provided by Leu20 and Asn27. Residue Ala128–Ala132 coordinates 5-phospho-alpha-D-ribose 1-diphosphate. Residue Lys156 coordinates xanthine.

This sequence belongs to the purine/pyrimidine phosphoribosyltransferase family. Xpt subfamily. Homodimer.

It localises to the cytoplasm. The catalysed reaction is XMP + diphosphate = xanthine + 5-phospho-alpha-D-ribose 1-diphosphate. Its pathway is purine metabolism; XMP biosynthesis via salvage pathway; XMP from xanthine: step 1/1. In terms of biological role, converts the preformed base xanthine, a product of nucleic acid breakdown, to xanthosine 5'-monophosphate (XMP), so it can be reused for RNA or DNA synthesis. This Lactobacillus acidophilus (strain ATCC 700396 / NCK56 / N2 / NCFM) protein is Xanthine phosphoribosyltransferase.